The primary structure comprises 408 residues: MSVMDAIVVSKPPAHTSASLEKPSLIGLSREEMGAALRERGVAEKQIKMRVAQLWNWIYVRGVSDFDHMTNVAKDMREMLKQHFTIARPEIVEEQVSNDGTRKWLLRFPPRGAGRPVEIEAVYIPEEGRGTLCISSQVGCTLTCSFCHTGTQRLVRNLTAEEILSQLLLARDRLGDFPDREAPQGTIMPAEGRKVSNIVMMGMGEPLYNFDAVKQALLIATDGDGLSLSRRRVTLSTSGVVPEIFRTGEEIGVMLAISLHAVRDDLRDILVPINKKYPLKELIEACKAYPGLSNARRITFEYVMLKDVNDSLEDAKGLIKLLKGVPAKINLIPFNPWPGTNYQCSDWEQIEKFADFINSAGYASPIRTPRGRDILAACGQLKSESERMRKTERLAFEAMMIANHGADD.

The active-site Proton acceptor is the E120. The 250-residue stretch at 126 to 375 folds into the Radical SAM core domain; that stretch reads EEGRGTLCIS…IRTPRGRDIL (250 aa). The cysteines at positions 133 and 378 are disulfide-linked. Residues C140, C144, and C147 each contribute to the [4Fe-4S] cluster site. S-adenosyl-L-methionine contacts are provided by residues 204–205, S236, 258–260, and N335; these read GE and SLH. The active-site S-methylcysteine intermediate is C378.

The protein belongs to the radical SAM superfamily. RlmN family. [4Fe-4S] cluster is required as a cofactor.

It is found in the cytoplasm. It carries out the reaction adenosine(2503) in 23S rRNA + 2 reduced [2Fe-2S]-[ferredoxin] + 2 S-adenosyl-L-methionine = 2-methyladenosine(2503) in 23S rRNA + 5'-deoxyadenosine + L-methionine + 2 oxidized [2Fe-2S]-[ferredoxin] + S-adenosyl-L-homocysteine. The enzyme catalyses adenosine(37) in tRNA + 2 reduced [2Fe-2S]-[ferredoxin] + 2 S-adenosyl-L-methionine = 2-methyladenosine(37) in tRNA + 5'-deoxyadenosine + L-methionine + 2 oxidized [2Fe-2S]-[ferredoxin] + S-adenosyl-L-homocysteine. Specifically methylates position 2 of adenine 2503 in 23S rRNA and position 2 of adenine 37 in tRNAs. m2A2503 modification seems to play a crucial role in the proofreading step occurring at the peptidyl transferase center and thus would serve to optimize ribosomal fidelity. This Rhizobium leguminosarum bv. trifolii (strain WSM2304) protein is Dual-specificity RNA methyltransferase RlmN.